The primary structure comprises 79 residues: Cell division protein ZapB (79 aa).

Residues 1 to 78 (MSLEALDQLQ…LNSLLGKMDD (78 aa)) are a coiled coil.

It belongs to the ZapB family. Homodimer. The ends of the coiled-coil dimer bind to each other, forming polymers. Interacts with FtsZ.

It localises to the cytoplasm. Its function is as follows. Non-essential, abundant cell division factor that is required for proper Z-ring formation. It is recruited early to the divisome by direct interaction with FtsZ, stimulating Z-ring assembly and thereby promoting cell division earlier in the cell cycle. Its recruitment to the Z-ring requires functional FtsA or ZipA. This is Cell division protein ZapB from Hamiltonella defensa subsp. Acyrthosiphon pisum (strain 5AT).